Reading from the N-terminus, the 152-residue chain is SsrA-binding protein (152 aa).

The protein belongs to the SmpB family.

The protein localises to the cytoplasm. Functionally, required for rescue of stalled ribosomes mediated by trans-translation. Binds to transfer-messenger RNA (tmRNA), required for stable association of tmRNA with ribosomes. tmRNA and SmpB together mimic tRNA shape, replacing the anticodon stem-loop with SmpB. tmRNA is encoded by the ssrA gene; the 2 termini fold to resemble tRNA(Ala) and it encodes a 'tag peptide', a short internal open reading frame. During trans-translation Ala-aminoacylated tmRNA acts like a tRNA, entering the A-site of stalled ribosomes, displacing the stalled mRNA. The ribosome then switches to translate the ORF on the tmRNA; the nascent peptide is terminated with the 'tag peptide' encoded by the tmRNA and targeted for degradation. The ribosome is freed to recommence translation, which seems to be the essential function of trans-translation. The chain is SsrA-binding protein from Rickettsia felis (strain ATCC VR-1525 / URRWXCal2) (Rickettsia azadi).